Here is a 595-residue protein sequence, read N- to C-terminus: S-(+)-linalool synthase, chloroplastic (595 aa).

Residues 1 to 46 (MVCHVFSSFSSSLIRVLEAPLLLPAASASSSSSSSPASRSGGRRRR) constitute a chloroplast transit peptide. The segment covering 27–40 (SASSSSSSSPASRS) has biased composition (low complexity). Residues 27–54 (SASSSSSSSPASRSGGRRRRAAHVRPSP) are disordered. The (2E)-geranyl diphosphate site is built by Arg-309, Asp-346, Asp-350, Arg-487, and Asp-490. Asp-346 and Asp-350 together coordinate Mg(2+). The DDXXD motif motif lies at 346–350 (DDIFD). Asp-490, Ser-494, and Glu-498 together coordinate Mg(2+).

Belongs to the terpene synthase family. Tpsb subfamily. It depends on Mg(2+) as a cofactor. Mn(2+) is required as a cofactor.

The protein localises to the plastid. It is found in the chloroplast. It catalyses the reaction (2E)-geranyl diphosphate + H2O = (S)-linalool + diphosphate. Its pathway is secondary metabolite biosynthesis; terpenoid biosynthesis. Involved in monoterpene (C10) biosynthesis. The major product is S-(+)-linalool. Linalool production is induced by jasmonate in response to pathogen attack, it possesses antibacterial activity and is important for resistance to the bacterial blight pathogen Xanthomonas oryzae pv. oryzae (Xoo). Plants over-expressing linalool synthase display enhanced resistance to Xoo. This chain is S-(+)-linalool synthase, chloroplastic, found in Oryza sativa subsp. japonica (Rice).